A 102-amino-acid chain; its full sequence is Small ribosomal subunit protein uS10 (102 aa).

Belongs to the universal ribosomal protein uS10 family. Part of the 30S ribosomal subunit.

In terms of biological role, involved in the binding of tRNA to the ribosomes. The sequence is that of Small ribosomal subunit protein uS10 from Symbiobacterium thermophilum (strain DSM 24528 / JCM 14929 / IAM 14863 / T).